A 387-amino-acid polypeptide reads, in one-letter code: Galactokinase (387 aa).

33 to 36 contributes to the substrate binding site; the sequence is EHID. ATP-binding positions include Ser67 and 124–130; that span reads GAGLSSS. Mg(2+) contacts are provided by Ser130 and Glu162. The active-site Proton acceptor is the Asp174. Residue Tyr224 coordinates substrate.

The protein belongs to the GHMP kinase family. GalK subfamily.

The protein resides in the cytoplasm. The catalysed reaction is alpha-D-galactose + ATP = alpha-D-galactose 1-phosphate + ADP + H(+). It participates in carbohydrate metabolism; galactose metabolism. Functionally, catalyzes the transfer of the gamma-phosphate of ATP to D-galactose to form alpha-D-galactose-1-phosphate (Gal-1-P). The sequence is that of Galactokinase from Clostridium perfringens (strain SM101 / Type A).